The primary structure comprises 360 residues: Peptide chain release factor 1 (360 aa).

N5-methylglutamine is present on glutamine 235. Residues 284–293 (HKRQQEEAST) are compositionally biased toward basic and acidic residues. The interval 284–305 (HKRQQEEASTRRNLLGSGDRSD) is disordered.

The protein belongs to the prokaryotic/mitochondrial release factor family. Methylated by PrmC. Methylation increases the termination efficiency of RF1.

It is found in the cytoplasm. Its function is as follows. Peptide chain release factor 1 directs the termination of translation in response to the peptide chain termination codons UAG and UAA. The sequence is that of Peptide chain release factor 1 from Pectobacterium atrosepticum (strain SCRI 1043 / ATCC BAA-672) (Erwinia carotovora subsp. atroseptica).